A 271-amino-acid polypeptide reads, in one-letter code: Very long chain fatty acid elongase 3 (271 aa).

Asparagine 6 carries an N-linked (GlcNAc...) asparagine glycan. Helical transmembrane passes span phenylalanine 30–valine 50, proline 67–tryptophan 87, phenylalanine 116–isoleucine 136, proline 141–tyrosine 161, valine 165–threonine 187, leucine 199–isoleucine 219, and histidine 236–histidine 256.

Belongs to the ELO family. ELOVL3 subfamily. Interacts with TECR. Post-translationally, N-Glycosylated. As to expression, expressed in brown adipose tissue and liver. In the skin, strong expressed in the cells of the inner layer of the outer root sheath of the hair follicles and in the sebocytes of the sebaceous glands. Hardly detectable in the epidermis and not at all in fibroblasts.

Its subcellular location is the endoplasmic reticulum membrane. It carries out the reaction a very-long-chain acyl-CoA + malonyl-CoA + H(+) = a very-long-chain 3-oxoacyl-CoA + CO2 + CoA. The catalysed reaction is eicosanoyl-CoA + malonyl-CoA + H(+) = 3-oxodocosanoyl-CoA + CO2 + CoA. It catalyses the reaction hexadecanoyl-CoA + malonyl-CoA + H(+) = 3-oxooctadecanoyl-CoA + CO2 + CoA. The enzyme catalyses octadecanoyl-CoA + malonyl-CoA + H(+) = 3-oxoeicosanoyl-CoA + CO2 + CoA. It carries out the reaction (9Z)-octadecenoyl-CoA + malonyl-CoA + H(+) = 3-oxo-(11Z)-eicosenoyl-CoA + CO2 + CoA. The catalysed reaction is (9Z,12Z)-octadecadienoyl-CoA + malonyl-CoA + H(+) = (11Z,14Z)-3-oxoicosa-11,14-dienoyl-CoA + CO2 + CoA. It catalyses the reaction (9Z,12Z,15Z)-octadecatrienoyl-CoA + malonyl-CoA + H(+) = (11Z,14Z,17Z)-3-oxoeicosatrienoyl-CoA + CO2 + CoA. The enzyme catalyses docosanoyl-CoA + malonyl-CoA + H(+) = 3-oxotetracosanoyl-CoA + CO2 + CoA. It carries out the reaction tetradecanoyl-CoA + malonyl-CoA + H(+) = 3-oxohexadecanoyl-CoA + CO2 + CoA. It functions in the pathway lipid metabolism; polyunsaturated fatty acid biosynthesis. Catalyzes the first and rate-limiting reaction of the four reactions that constitute the long-chain fatty acids elongation cycle. This endoplasmic reticulum-bound enzymatic process allows the addition of 2 carbons to the chain of long- and very long-chain fatty acids (VLCFAs) per cycle. Condensing enzyme that exhibits activity toward saturated and unsaturated acyl-CoA substrates with higher activity toward C18 acyl-CoAs, especially C18:0 acyl-CoAs. May participate in the production of saturated and monounsaturated VLCFAs of different chain lengths that are involved in multiple biological processes as precursors of membrane lipids and lipid mediators. Participates in the formation of certain VLCFA and triglycerides in certain cells of the hair follicles and the sebaceous glands, required for skin barrier function. Critical enzyme for lipid accumulation and metabolic activity in brown adipocytes during the early phase of the tissue recruitment. Plays a role in lipid storage and in resistance to diet-induced obesity. This chain is Very long chain fatty acid elongase 3, found in Mus musculus (Mouse).